The sequence spans 309 residues: uncharacterized protein (309 aa).

Residues 272–291 (PSLDAPSETVEAFPEPQKNL) are disordered.

This is an uncharacterized protein from Bacillus subtilis (strain 168).